The following is a 354-amino-acid chain: uncharacterized protein (354 aa).

Positions V309–G326 are enriched in polar residues. The disordered stretch occupies residues V309–E333. A coiled-coil region spans residues G326–N353.

It is found in the virion. This is an uncharacterized protein from Acanthamoeba polyphaga (Amoeba).